A 113-amino-acid polypeptide reads, in one-letter code: Nucleoid-associated protein FMG_0513 (113 aa).

Residues 1-44 form a disordered region; sequence MGNKFRGGMPGMGNMGNMMKQMQKMQRQMEETQKRLEETEVTAT. Positions 15–26 are enriched in low complexity; sequence MGNMMKQMQKMQ. The segment covering 27–38 has biased composition (basic and acidic residues); that stretch reads RQMEETQKRLEE.

It belongs to the YbaB/EbfC family. Homodimer.

It localises to the cytoplasm. The protein localises to the nucleoid. In terms of biological role, binds to DNA and alters its conformation. May be involved in regulation of gene expression, nucleoid organization and DNA protection. The chain is Nucleoid-associated protein FMG_0513 from Finegoldia magna (strain ATCC 29328 / DSM 20472 / WAL 2508) (Peptostreptococcus magnus).